Here is a 255-residue protein sequence, read N- to C-terminus: Ornithine decarboxylase antizyme (255 aa).

Belongs to the ODC antizyme family. Interacts with ODC and thereby sterically blocks ODC homodimerization.

Its function is as follows. Ornithine decarboxylase (ODC) antizyme protein that negatively regulates ODC activity and intracellular polyamine biosynthesis in response to increased intracellular polyamine levels. Binds to ODC monomers, inhibiting the assembly of the functional ODC homodimer, and targets the monomers for ubiquitin-independent proteolytic destruction by the 26S proteasome. The protein is Ornithine decarboxylase antizyme (OAZ1) of Eremothecium gossypii (strain ATCC 10895 / CBS 109.51 / FGSC 9923 / NRRL Y-1056) (Yeast).